The chain runs to 414 residues: DNA polymerase IV 1 (414 aa).

In terms of domain architecture, UmuC spans 8-189; the sequence is IFHIDMNSFY…LPVGEMHGVG (182 aa). Aspartate 12 and aspartate 108 together coordinate Mg(2+). Glutamate 109 is an active-site residue. The segment at 391–414 is disordered; that stretch reads LKKEESKTKGTSFNKDFFQDEKKS.

The protein belongs to the DNA polymerase type-Y family. Monomer. Requires Mg(2+) as cofactor.

Its subcellular location is the cytoplasm. It catalyses the reaction DNA(n) + a 2'-deoxyribonucleoside 5'-triphosphate = DNA(n+1) + diphosphate. Functionally, poorly processive, error-prone DNA polymerase involved in untargeted mutagenesis. Copies undamaged DNA at stalled replication forks, which arise in vivo from mismatched or misaligned primer ends. These misaligned primers can be extended by PolIV. Exhibits no 3'-5' exonuclease (proofreading) activity. May be involved in translesion synthesis (TSL), in conjunction with the beta clamp from PolIII. The sequence is that of DNA polymerase IV 1 (dinB1) from Bacillus subtilis (strain 168).